The sequence spans 232 residues: Lipoprotein-releasing system ATP-binding protein LolD (232 aa).

In terms of domain architecture, ABC transporter spans 11–232; it reads IEVTDLQRAF…LHDGRLIEEY (222 aa). 47–54 is a binding site for ATP; it reads GPSGAGKS.

The protein belongs to the ABC transporter superfamily. Lipoprotein translocase (TC 3.A.1.125) family. In terms of assembly, the complex is composed of two ATP-binding proteins (LolD) and two transmembrane proteins (LolC and LolE).

Its subcellular location is the cell inner membrane. In terms of biological role, part of the ABC transporter complex LolCDE involved in the translocation of mature outer membrane-directed lipoproteins, from the inner membrane to the periplasmic chaperone, LolA. Responsible for the formation of the LolA-lipoprotein complex in an ATP-dependent manner. The sequence is that of Lipoprotein-releasing system ATP-binding protein LolD from Zymomonas mobilis subsp. mobilis (strain ATCC 10988 / DSM 424 / LMG 404 / NCIMB 8938 / NRRL B-806 / ZM1).